We begin with the raw amino-acid sequence, 178 residues long: Crossover junction endodeoxyribonuclease RuvC (178 aa).

Residues Asp21, Glu81, and His154 contribute to the active site. The Mg(2+) site is built by Asp21, Glu81, and His154.

This sequence belongs to the RuvC family. Homodimer which binds Holliday junction (HJ) DNA. The HJ becomes 2-fold symmetrical on binding to RuvC with unstacked arms; it has a different conformation from HJ DNA in complex with RuvA. In the full resolvosome a probable DNA-RuvA(4)-RuvB(12)-RuvC(2) complex forms which resolves the HJ. Mg(2+) serves as cofactor.

The protein resides in the cytoplasm. The catalysed reaction is Endonucleolytic cleavage at a junction such as a reciprocal single-stranded crossover between two homologous DNA duplexes (Holliday junction).. Functionally, the RuvA-RuvB-RuvC complex processes Holliday junction (HJ) DNA during genetic recombination and DNA repair. Endonuclease that resolves HJ intermediates. Cleaves cruciform DNA by making single-stranded nicks across the HJ at symmetrical positions within the homologous arms, yielding a 5'-phosphate and a 3'-hydroxyl group; requires a central core of homology in the junction. The consensus cleavage sequence is 5'-(A/T)TT(C/G)-3'. Cleavage occurs on the 3'-side of the TT dinucleotide at the point of strand exchange. HJ branch migration catalyzed by RuvA-RuvB allows RuvC to scan DNA until it finds its consensus sequence, where it cleaves and resolves the cruciform DNA. The sequence is that of Crossover junction endodeoxyribonuclease RuvC from Treponema denticola (strain ATCC 35405 / DSM 14222 / CIP 103919 / JCM 8153 / KCTC 15104).